A 291-amino-acid chain; its full sequence is Pituitary-specific positive transcription factor 1 (291 aa).

A 9aaTAD motif is present at residues 5 to 13 (PFTSTDTFI). Positions 124-198 (MDSPEIRELE…ILFKWLEEAE (75 aa)) constitute a POU-specific domain. The homeobox DNA-binding region spans 214-273 (KRKRRTTISIAAKDALERHFGEQNKPSSQEILRMAEELNLEKEVVRVWFCNRRQREKRVK).

The protein belongs to the POU transcription factor family. Class-1 subfamily. Interacts with PITX1. Interacts with LHX3. Interacts with ELK1.

It localises to the nucleus. Functionally, transcription factor involved in the specification of the lactotrope, somatotrope, and thyrotrope phenotypes in the developing anterior pituitary. Activates growth hormone and prolactin genes. Specifically binds to the consensus sequence 5'-TAAAT-3'. The protein is Pituitary-specific positive transcription factor 1 (POU1F1) of Ovis aries (Sheep).